The chain runs to 186 residues: NADH-quinone oxidoreductase subunit C (186 aa).

Positions 166 to 186 (DSLTPWKGVGRPSDPFDGRKE) are disordered.

This sequence belongs to the complex I 30 kDa subunit family. NDH-1 is composed of 14 different subunits. Subunits NuoB, C, D, E, F, and G constitute the peripheral sector of the complex.

It is found in the cell inner membrane. It catalyses the reaction a quinone + NADH + 5 H(+)(in) = a quinol + NAD(+) + 4 H(+)(out). In terms of biological role, NDH-1 shuttles electrons from NADH, via FMN and iron-sulfur (Fe-S) centers, to quinones in the respiratory chain. The immediate electron acceptor for the enzyme in this species is believed to be ubiquinone. Couples the redox reaction to proton translocation (for every two electrons transferred, four hydrogen ions are translocated across the cytoplasmic membrane), and thus conserves the redox energy in a proton gradient. The protein is NADH-quinone oxidoreductase subunit C of Neorickettsia sennetsu (strain ATCC VR-367 / Miyayama) (Ehrlichia sennetsu).